The primary structure comprises 565 residues: Oxygen-dependent choline dehydrogenase (565 aa).

Residue 6–35 (DYIIIGAGSAGNVLATRLTEDADVSVLLLE) coordinates FAD. The active-site Proton acceptor is the H475. Residues 541–565 (RSNAPYFVAGERPVRGQPQRAVSAA) form a disordered region.

This sequence belongs to the GMC oxidoreductase family. It depends on FAD as a cofactor.

The catalysed reaction is choline + A = betaine aldehyde + AH2. It carries out the reaction betaine aldehyde + NAD(+) + H2O = glycine betaine + NADH + 2 H(+). Its pathway is amine and polyamine biosynthesis; betaine biosynthesis via choline pathway; betaine aldehyde from choline (cytochrome c reductase route): step 1/1. Functionally, involved in the biosynthesis of the osmoprotectant glycine betaine. Catalyzes the oxidation of choline to betaine aldehyde and betaine aldehyde to glycine betaine at the same rate. This is Oxygen-dependent choline dehydrogenase from Ectopseudomonas mendocina (strain ymp) (Pseudomonas mendocina).